We begin with the raw amino-acid sequence, 37 residues long: Large ribosomal subunit protein bL36 (37 aa).

The protein belongs to the bacterial ribosomal protein bL36 family.

This chain is Large ribosomal subunit protein bL36, found in Staphylococcus saprophyticus subsp. saprophyticus (strain ATCC 15305 / DSM 20229 / NCIMB 8711 / NCTC 7292 / S-41).